A 79-amino-acid polypeptide reads, in one-letter code: NADH-ubiquinone oxidoreductase chain 4 (79 aa).

Helical transmembrane passes span 24–44 (SYTLMIAHGLCSSGLFCLANI) and 54–74 (LLINKGLLNFMPSLSLWWFLL).

This sequence belongs to the complex I subunit 4 family.

The protein localises to the mitochondrion membrane. The enzyme catalyses a ubiquinone + NADH + 5 H(+)(in) = a ubiquinol + NAD(+) + 4 H(+)(out). Functionally, core subunit of the mitochondrial membrane respiratory chain NADH dehydrogenase (Complex I) that is believed to belong to the minimal assembly required for catalysis. Complex I functions in the transfer of electrons from NADH to the respiratory chain. The immediate electron acceptor for the enzyme is believed to be ubiquinone. The polypeptide is NADH-ubiquinone oxidoreductase chain 4 (ND4) (Simulium vittatum (Striped black fly)).